Consider the following 218-residue polypeptide: Embryonic polyadenylate-binding protein 2-A (218 aa).

Residues 1 to 16 (MSERVSEEPGLDKGDG) show a composition bias toward basic and acidic residues. 2 disordered regions span residues 1 to 26 (MSERVSEEPGLDKGDGAEECELDDPE) and 169 to 218 (RTNM…NHPY). In terms of domain architecture, RRM spans 93 to 170 (RSVYVGNVDY…RTIKVLPKRT (78 aa)). The segment covering 205 to 218 (FRGCGRPGPLNHPY) has biased composition (low complexity).

It localises to the cytoplasm. In terms of biological role, binds the poly(A) tail of mRNA. Unable to interact with the cap-binding complex and is therefore unlikely to be involved in translation initiation. This chain is Embryonic polyadenylate-binding protein 2-A (Pabpn1l-a), found in Xenopus laevis (African clawed frog).